Reading from the N-terminus, the 445-residue chain is tRNA-2-methylthio-N(6)-dimethylallyladenosine synthase (445 aa).

An MTTase N-terminal domain is found at Lys7–Ala121. Residues Cys16, Cys52, Cys84, Cys158, Cys162, and Cys165 each coordinate [4Fe-4S] cluster. In terms of domain architecture, Radical SAM core spans Arg144–Arg374. The TRAM domain maps to Ala377 to Ala443.

Belongs to the methylthiotransferase family. MiaB subfamily. Monomer. The cofactor is [4Fe-4S] cluster.

It localises to the cytoplasm. It carries out the reaction N(6)-dimethylallyladenosine(37) in tRNA + (sulfur carrier)-SH + AH2 + 2 S-adenosyl-L-methionine = 2-methylsulfanyl-N(6)-dimethylallyladenosine(37) in tRNA + (sulfur carrier)-H + 5'-deoxyadenosine + L-methionine + A + S-adenosyl-L-homocysteine + 2 H(+). Its function is as follows. Catalyzes the methylthiolation of N6-(dimethylallyl)adenosine (i(6)A), leading to the formation of 2-methylthio-N6-(dimethylallyl)adenosine (ms(2)i(6)A) at position 37 in tRNAs that read codons beginning with uridine. The polypeptide is tRNA-2-methylthio-N(6)-dimethylallyladenosine synthase (Solibacter usitatus (strain Ellin6076)).